Here is a 163-residue protein sequence, read N- to C-terminus: Nucleotide-binding protein RER_17110 (163 aa).

The protein belongs to the YajQ family.

Functionally, nucleotide-binding protein. This chain is Nucleotide-binding protein RER_17110, found in Rhodococcus erythropolis (strain PR4 / NBRC 100887).